The chain runs to 368 residues: 2-aminoethylphosphonate--pyruvate transaminase (368 aa).

Position 192 is an N6-(pyridoxal phosphate)lysine (K192).

This sequence belongs to the class-V pyridoxal-phosphate-dependent aminotransferase family. PhnW subfamily. As to quaternary structure, homodimer. It depends on pyridoxal 5'-phosphate as a cofactor.

It catalyses the reaction (2-aminoethyl)phosphonate + pyruvate = phosphonoacetaldehyde + L-alanine. Its function is as follows. Involved in phosphonate degradation. This Pseudomonas putida (strain W619) protein is 2-aminoethylphosphonate--pyruvate transaminase.